We begin with the raw amino-acid sequence, 429 residues long: Ribosomal RNA small subunit methyltransferase B (429 aa).

S-adenosyl-L-methionine is bound by residues 254 to 260 (CAAPGGK), Asp-277, Asp-303, and Asp-322. Cys-375 (nucleophile) is an active-site residue. The disordered stretch occupies residues 397–419 (ALSETGTPDQPGQQNLPGGEEGD). The span at 400-412 (ETGTPDQPGQQNL) shows a compositional bias: polar residues.

It belongs to the class I-like SAM-binding methyltransferase superfamily. RsmB/NOP family.

The protein resides in the cytoplasm. It carries out the reaction cytidine(967) in 16S rRNA + S-adenosyl-L-methionine = 5-methylcytidine(967) in 16S rRNA + S-adenosyl-L-homocysteine + H(+). In terms of biological role, specifically methylates the cytosine at position 967 (m5C967) of 16S rRNA. The sequence is that of Ribosomal RNA small subunit methyltransferase B from Salmonella paratyphi A (strain ATCC 9150 / SARB42).